The sequence spans 240 residues: 31 kDa outer-membrane immunogenic protein (240 aa).

The signal sequence occupies residues 1–19 (MKSVILASIAAMFATSAMA). The epitope recognized by the monoclonal antibody A59/10F09/G10 stretch occupies residues 48–83 (NAGYAGGKFKHPFSSFDKEDNEQVSGSLDVTAGGFV).

It belongs to the Omp25/RopB family. Oligomeric.

Its subcellular location is the cell outer membrane. In terms of biological role, major outer membrane protein associated with peptidoglycans. May function as a porin. This chain is 31 kDa outer-membrane immunogenic protein (omp31), found in Brucella melitensis biotype 1 (strain ATCC 23456 / CCUG 17765 / NCTC 10094 / 16M).